Consider the following 317-residue polypeptide: Inositol oxygenase 2 (317 aa).

Residues R57 and 115 to 117 each bind substrate; that span reads DES. Residues H128, H153, and D154 each contribute to the Fe cation site. Residues K157 and 174-175 each bind substrate; that span reads GD. Residues H226, H252, and D285 each coordinate Fe cation. Residue 252–253 coordinates substrate; sequence HS.

Belongs to the myo-inositol oxygenase family. Fe cation serves as cofactor. As to expression, expressed mainly in roots, stems, flowers and siliques. Low expression in leaves.

Its subcellular location is the cytoplasm. The enzyme catalyses myo-inositol + O2 = D-glucuronate + H2O + H(+). It participates in polyol metabolism; myo-inositol degradation into D-glucuronate; D-glucuronate from myo-inositol: step 1/1. Functionally, involved in the biosynthesis of UDP-glucuronic acid (UDP-GlcA), providing nucleotide sugars for cell-wall polymers. May be also involved in plant ascorbate biosynthesis. This is Inositol oxygenase 2 (MIOX2) from Arabidopsis thaliana (Mouse-ear cress).